A 160-amino-acid polypeptide reads, in one-letter code: Twist-related protein 2 (160 aa).

The tract at residues 1–63 is disordered; that stretch reads MEEGSSSPVS…GSPSAQSFEE (63 aa). Over residues 27–37 the composition is skewed to basic residues; sequence KRFGRKRRYSK. The bHLH domain maps to 66–117; it reads SQRILANVRERQRTQSLNEAFAALRKIIPTLPSDKLSKIQTLKLAARYIDFL.

In terms of assembly, efficient DNA binding requires dimerization with another bHLH protein. Forms a heterodimer with TCF3/E12. Also interacts with MEF2C. As to expression, in the embryo, highly expressed in chondrogenic cells. In embryonic skin, expressed in the undifferentiated mesenchymal layer beneath the epidermis which later develops into the dermis. Expressed in early myeloid cells but not in lymphoid cells in the liver. Expression also detected in the secretory ependymal epithelium of the choroid plexus primordium. In the adult, expressed in secreting glandular tissues and tubules.

The protein localises to the nucleus. It is found in the cytoplasm. Binds to the E-box consensus sequence 5'-CANNTG-3' as a heterodimer and inhibits transcriptional activation by MYOD1, MYOG, MEF2A and MEF2C. Also represses expression of pro-inflammatory cytokines such as TNFA and IL1B. Involved in postnatal glycogen storage and energy metabolism. Inhibits the premature or ectopic differentiation of preosteoblast cells during osteogenesis, possibly by changing the internal signal transduction response of osteoblasts to external growth factors. The chain is Twist-related protein 2 (TWIST2) from Homo sapiens (Human).